A 185-amino-acid polypeptide reads, in one-letter code: Adenylate kinase (185 aa).

8-16 serves as a coordination point for ATP; it reads GIPGSGSTT.

The protein belongs to the archaeal adenylate kinase family.

It localises to the cytoplasm. The enzyme catalyses AMP + ATP = 2 ADP. The protein is Adenylate kinase (adkA) of Methanothermobacter thermautotrophicus (strain ATCC 29096 / DSM 1053 / JCM 10044 / NBRC 100330 / Delta H) (Methanobacterium thermoautotrophicum).